We begin with the raw amino-acid sequence, 32 residues long: GILSSIKGVAKGVAKNVAAQLLDTLKCKITGC.

A disulfide bridge links Cys-27 with Cys-32.

In terms of tissue distribution, expressed by the skin glands.

The protein resides in the secreted. Functionally, antibacterial activity against Gram-positive bacterium S.aureus and Gram-negative bacterium E.coli. Has activity against C.albicans. The polypeptide is Ranatuerin-2Lb (Rana luteiventris (Columbia spotted frog)).